A 58-amino-acid polypeptide reads, in one-letter code: Histatherin (58 aa).

The first 19 residues, 1–19 (MKIFIFIFIMALILAMIRA), serve as a signal peptide directing secretion.

It belongs to the histatin/statherin family. As to expression, expressed in mammary glands.

It is found in the secreted. This is Histatherin from Bos taurus (Bovine).